The primary structure comprises 302 residues: 4-hydroxy-tetrahydrodipicolinate synthase (302 aa).

T57 is a pyruvate binding site. Catalysis depends on Y145, which acts as the Proton donor/acceptor. Residue K173 is the Schiff-base intermediate with substrate of the active site. Residue I213 participates in pyruvate binding.

Belongs to the DapA family. Homotetramer; dimer of dimers.

The protein resides in the cytoplasm. The enzyme catalyses L-aspartate 4-semialdehyde + pyruvate = (2S,4S)-4-hydroxy-2,3,4,5-tetrahydrodipicolinate + H2O + H(+). It participates in amino-acid biosynthesis; L-lysine biosynthesis via DAP pathway; (S)-tetrahydrodipicolinate from L-aspartate: step 3/4. Its function is as follows. Catalyzes the condensation of (S)-aspartate-beta-semialdehyde [(S)-ASA] and pyruvate to 4-hydroxy-tetrahydrodipicolinate (HTPA). The polypeptide is 4-hydroxy-tetrahydrodipicolinate synthase (Mycolicibacterium gilvum (strain PYR-GCK) (Mycobacterium gilvum (strain PYR-GCK))).